The following is a 96-amino-acid chain: Non-specific lipid-transfer protein 2 (96 aa).

An N-terminal signal peptide occupies residues 1–27 (MMRRLAVLVLAVAMVAACGGGVVGVAG). Cystine bridges form between Cys-30/Cys-62, Cys-38/Cys-52, Cys-53/Cys-88, and Cys-64/Cys-95.

Belongs to the plant LTP family. B11E subfamily.

Its function is as follows. Transfer lipids across membranes. May play a role in plant defense or in the biosynthesis of cuticle layers. This is Non-specific lipid-transfer protein 2 (LTP-2) from Oryza sativa subsp. indica (Rice).